Consider the following 1150-residue polypeptide: DNA polymerase (1150 aa).

Residues 1–53 (MSLVQGHGTSGLFTEPPNPINQQESSGPSLPAQDAAQAFASSPRAGATSTIVN) form a disordered region.

Belongs to the DNA polymerase type-B family. In terms of assembly, heterodimer with the terminal protein; this heterodimer binds to bp 9 to 18 of the genome. Forms a complex with viral pTP, DBP and hosts NFIA and POU2F1/OCT1 for initiation of replication.

It is found in the host nucleus. The enzyme catalyses DNA(n) + a 2'-deoxyribonucleoside 5'-triphosphate = DNA(n+1) + diphosphate. Its function is as follows. Eukaryotic-type DNA polymerase involved in viral genomic replication. DNA synthesis is protein primed, and acts in a strand displacement replication. Assembles in complex with viral pTP, DBP, host NFIA and host POU2F1/OCT1 on viral origin of replication. The polymerase covalently transfers dCMP onto pTP, thereby initiating complementary strand synthesis. The polypeptide is DNA polymerase (Canis lupus familiaris (Dog)).